The primary structure comprises 263 residues: uncharacterized protein (263 aa).

Position 13–20 (13–20 (TGSTSGIG)) interacts with NADP(+). Ser-141 contacts substrate. Residue Tyr-154 is the Proton acceptor of the active site.

It belongs to the short-chain dehydrogenases/reductases (SDR) family.

This is an uncharacterized protein from Bacillus subtilis (strain 168).